The primary structure comprises 582 residues: Protein NRT1/ PTR FAMILY 5.2 (582 aa).

Helical transmembrane passes span 77–97 (WVGT…ALLG), 100–120 (ITFV…TLSV), 141–161 (ASVL…IGTG), 189–209 (FFNW…TVLV), 217–237 (WTLG…IFLL), 334–354 (PVLF…TLFV), 370–390 (IPPA…IVLY), 408–428 (ITLL…MIVA), 452–472 (LPLT…ADSF), 493–515 (GTSY…LSTV), and 538–558 (YYYL…LVVV).

This sequence belongs to the major facilitator superfamily. Proton-dependent oligopeptide transporter (POT/PTR) (TC 2.A.17) family. In terms of tissue distribution, expressed in roots. Detected in shoots, leaves and flowers.

It is found in the membrane. In terms of biological role, peptide transporter involved in stress tolerance in seeds during germination and in defense against virulent bacterial pathogens. The polypeptide is Protein NRT1/ PTR FAMILY 5.2 (NPF5.2) (Arabidopsis thaliana (Mouse-ear cress)).